A 539-amino-acid polypeptide reads, in one-letter code: Protein peanut (539 aa).

Ser6 and Ser13 each carry phosphoserine. The tract at residues 29–90 (LRDKQQAASA…GASNGDSNKL (62 aa)) is disordered. The span at 35 to 54 (AASASASSATNGSSGSESLV) shows a compositional bias: low complexity. The Septin-type G domain occupies 139-411 (RGFEFTLMVV…ENYRCRKLSE (273 aa)). The tract at residues 149–156 (GASGLGKS) is G1 motif. Residues 149 to 156 (GASGLGKS), Thr183, Gly209, 288 to 296 (KADTMTPDE), Gly345, and Arg360 each bind GTP. Residues 206 to 209 (DTPG) are G3 motif. The segment at 287-290 (AKAD) is G4 motif. Positions 420–516 (RLSNKNPLTQ…HVTLEELKRR (97 aa)) form a coiled coil. The tract at residues 513–539 (LKRRSLGANSSTDNVDGKKEKKKKGLF) is disordered. Ser517 bears the Phosphoserine mark.

The protein belongs to the TRAFAC class TrmE-Era-EngA-EngB-Septin-like GTPase superfamily. Septin GTPase family. As to quaternary structure, likely part of a multicomponent septin complex that includes Septin1. Interacts with Septin1. Interacts with hil. Interacts with park. Post-translationally, ubiquitinated by park, leading to its degradation by the proteasome. In terms of tissue distribution, accumulates at the leading edge of the cleavage furrow in dividing cells and cellularizing embryos (at protein level).

It is found in the apical cell membrane. The protein localises to the cleavage furrow. It localises to the cytoplasm. The protein resides in the cell cortex. Functionally, involved in cytokinesis and possibly cellularization. Also acts as an enhancer of the sina gene, thus having a role in photoreceptor development. May be involved in p53-dependent apoptosis. This chain is Protein peanut (pnut), found in Drosophila melanogaster (Fruit fly).